Consider the following 392-residue polypeptide: Stilbene synthase 5 (392 aa).

Position 55 to 58 (55 to 58 (KFNR)) interacts with substrate. The active site involves Cys-164. Residues Leu-267 and 305 to 307 (GGP) each bind substrate.

Belongs to the thiolase-like superfamily. Chalcone/stilbene synthases family. As to quaternary structure, homodimer.

It localises to the cytoplasm. It carries out the reaction 4-coumaroyl-CoA + 3 malonyl-CoA + 3 H(+) = trans-resveratrol + 4 CO2 + 4 CoA. Its pathway is phytoalexin biosynthesis; 3,4',5-trihydroxystilbene biosynthesis; 3,4',5-trihydroxystilbene from trans-4-coumarate: step 2/2. Its function is as follows. Mediates resistance to pathogens which are sensitive to stilbenes. The protein is Stilbene synthase 5 of Vitis vinifera (Grape).